The primary structure comprises 644 residues: Translation factor guf1, mitochondrial (644 aa).

Residues 1–31 (MTLRRFSYTFQARILRGLQARPVFVLPSRSH) constitute a mitochondrion transit peptide. Residues 51 to 232 (VNIRNWAIIS…AIIQRVPHPI (182 aa)) enclose the tr-type G domain. GTP contacts are provided by residues 60 to 67 (SHIDHGKS), 125 to 129 (DTPGH), and 179 to 182 (NKID).

This sequence belongs to the TRAFAC class translation factor GTPase superfamily. Classic translation factor GTPase family. LepA subfamily.

Its subcellular location is the mitochondrion inner membrane. The enzyme catalyses GTP + H2O = GDP + phosphate + H(+). Its function is as follows. Promotes mitochondrial protein synthesis. May act as a fidelity factor of the translation reaction, by catalyzing a one-codon backward translocation of tRNAs on improperly translocated ribosomes. Binds to mitochondrial ribosomes in a GTP-dependent manner. The sequence is that of Translation factor guf1, mitochondrial (guf1) from Schizosaccharomyces japonicus (strain yFS275 / FY16936) (Fission yeast).